Here is a 465-residue protein sequence, read N- to C-terminus: Argininosuccinate lyase (465 aa).

The protein belongs to the lyase 1 family. Argininosuccinate lyase subfamily.

The protein localises to the cytoplasm. It carries out the reaction 2-(N(omega)-L-arginino)succinate = fumarate + L-arginine. Its pathway is amino-acid biosynthesis; L-arginine biosynthesis; L-arginine from L-ornithine and carbamoyl phosphate: step 3/3. The protein is Argininosuccinate lyase of Nitrobacter winogradskyi (strain ATCC 25391 / DSM 10237 / CIP 104748 / NCIMB 11846 / Nb-255).